A 212-amino-acid chain; its full sequence is Ribosome maturation factor RimM (212 aa).

Residues 105-181 (EEEFYYADLI…IDSITAGLDN (77 aa)) enclose the PRC barrel domain. Residues 181–212 (NAELSGEEDEAEGPESARGSRPRGPKSAGEPR) are disordered.

This sequence belongs to the RimM family. As to quaternary structure, binds ribosomal protein uS19.

It localises to the cytoplasm. In terms of biological role, an accessory protein needed during the final step in the assembly of 30S ribosomal subunit, possibly for assembly of the head region. Essential for efficient processing of 16S rRNA. May be needed both before and after RbfA during the maturation of 16S rRNA. It has affinity for free ribosomal 30S subunits but not for 70S ribosomes. The chain is Ribosome maturation factor RimM from Chelativorans sp. (strain BNC1).